The following is a 371-amino-acid chain: Transaldolase (371 aa).

Catalysis depends on lysine 140, which acts as the Schiff-base intermediate with substrate.

It belongs to the transaldolase family. Type 2 subfamily.

It is found in the cytoplasm. The catalysed reaction is D-sedoheptulose 7-phosphate + D-glyceraldehyde 3-phosphate = D-erythrose 4-phosphate + beta-D-fructose 6-phosphate. It participates in carbohydrate degradation; pentose phosphate pathway; D-glyceraldehyde 3-phosphate and beta-D-fructose 6-phosphate from D-ribose 5-phosphate and D-xylulose 5-phosphate (non-oxidative stage): step 2/3. Functionally, transaldolase is important for the balance of metabolites in the pentose-phosphate pathway. This chain is Transaldolase, found in Frankia alni (strain DSM 45986 / CECT 9034 / ACN14a).